The following is a 325-amino-acid chain: Tagatose 1,6-diphosphate aldolase 1 (325 aa).

This sequence belongs to the aldolase LacD family.

The catalysed reaction is D-tagatofuranose 1,6-bisphosphate = D-glyceraldehyde 3-phosphate + dihydroxyacetone phosphate. It functions in the pathway carbohydrate metabolism; D-tagatose 6-phosphate degradation; D-glyceraldehyde 3-phosphate and glycerone phosphate from D-tagatose 6-phosphate: step 2/2. This chain is Tagatose 1,6-diphosphate aldolase 1 (lacD1), found in Streptococcus mutans serotype c (strain ATCC 700610 / UA159).